A 208-amino-acid polypeptide reads, in one-letter code: Hemocyanin, units E and F (208 aa).

H1 contributes to the Cu cation binding site. Positions 1 to 74 (HGLPAQCPNA…HDLESVRGNL (74 aa)) are unit E. C7 and C18 are joined by a disulfide. Residues 19 to 21 (CLH) constitute a cross-link (2'-(S-cysteinyl)-histidine (Cys-His)). The N-linked (GlcNAc...) asparagine glycan is linked to N43. The segment at 75–208 (VRKNVDRLSL…GHLSLLSPET (134 aa)) is unit F. Residue H113 coordinates Cu cation. C119 and C130 are disulfide-bonded. The segment at residues 131 to 133 (CLH) is a cross-link (2'-(S-cysteinyl)-histidine (Cys-His)). Cu cation is bound by residues H133 and H142.

The protein belongs to the tyrosinase family. Hemocyanin subfamily. In terms of assembly, decamers of large identical subunits (390 kDa), each containing 8 globular oxygen-binding functional units. The cofactor is Cu(2+).

Its function is as follows. Hemocyanins are copper-containing oxygen carriers occurring freely dissolved in the hemolymph of many mollusks and arthropods. This Sepia officinalis (Common cuttlefish) protein is Hemocyanin, units E and F.